The primary structure comprises 150 residues: Large ribosomal subunit protein eL19 (150 aa).

The segment at 59 to 89 is disordered; that stretch reads SRYRARIRHEQKKKGRHRGPGSRKGKKTARM. The segment covering 61–89 has biased composition (basic residues); sequence YRARIRHEQKKKGRHRGPGSRKGKKTARM.

The protein belongs to the eukaryotic ribosomal protein eL19 family. In terms of assembly, part of the 50S ribosomal subunit.

In terms of biological role, binds to the 23S rRNA. This is Large ribosomal subunit protein eL19 from Pyrococcus horikoshii (strain ATCC 700860 / DSM 12428 / JCM 9974 / NBRC 100139 / OT-3).